We begin with the raw amino-acid sequence, 223 residues long: Cytidylate kinase (223 aa).

10 to 18 (GPASSGKST) provides a ligand contact to ATP.

The protein belongs to the cytidylate kinase family. Type 1 subfamily.

The protein localises to the cytoplasm. It catalyses the reaction CMP + ATP = CDP + ADP. The catalysed reaction is dCMP + ATP = dCDP + ADP. The sequence is that of Cytidylate kinase from Streptococcus pneumoniae (strain 70585).